The primary structure comprises 398 residues: MVKRVHIFDWHKEHARKIEEFAGWEMPIWYSSIKEEHLAVRNAVGIFDVSHMGEIVFRGKDALKFLQYVTTNDISKPPAISGTYTLVLNERGAIKDETLVFNMGNNEYLMICDSDAFEKLYAWFTYLKRTIEQFTKLDLEIELKTYDIAMFAVQGPKARDLAKDLFGIDINEMWWFQARWVELDGIKMLLSRSGYTGENGFEVYIEDANPYHPDESKRGEPEKALHVWERILEEGKKYGIKPCGLGARDTLRLEAGYTLYGNETKELQLLSTDIDEVTPLQANLEFAIYWDKDFIGKDALLKQKERGVGRKLVHFKMIDKGIPREGYKVYANGEMIGEVTSGTLSPLLNVGIGIAFVKEEYAKPGIEIEVEIRGQRKKAVTVTPPFYDPKKYGLFRET.

It belongs to the GcvT family. In terms of assembly, the glycine cleavage system is composed of four proteins: P, T, L and H.

The catalysed reaction is N(6)-[(R)-S(8)-aminomethyldihydrolipoyl]-L-lysyl-[protein] + (6S)-5,6,7,8-tetrahydrofolate = N(6)-[(R)-dihydrolipoyl]-L-lysyl-[protein] + (6R)-5,10-methylene-5,6,7,8-tetrahydrofolate + NH4(+). Functionally, the glycine cleavage system catalyzes the degradation of glycine. This is Probable aminomethyltransferase from Pyrococcus horikoshii (strain ATCC 700860 / DSM 12428 / JCM 9974 / NBRC 100139 / OT-3).